The chain runs to 197 residues: MRTATIKRKTKETDIEVTVNLDGAGVSNAATGIGFFDHMLDLLAKHSRIDITVKAVGDLHVDFHHTTEDVGIALGQAVKQALGNMAGINRYASMLMPMDETLTRVVIDVSGRPFLVFKADFPRDKIGEFDTELVREWFQAFAMNAGVTLHVETLYGENSHHIAESCFKGLARALRAAVAIDPQAAGEVPSTKGQLGG.

This sequence belongs to the imidazoleglycerol-phosphate dehydratase family.

It is found in the cytoplasm. It carries out the reaction D-erythro-1-(imidazol-4-yl)glycerol 3-phosphate = 3-(imidazol-4-yl)-2-oxopropyl phosphate + H2O. It functions in the pathway amino-acid biosynthesis; L-histidine biosynthesis; L-histidine from 5-phospho-alpha-D-ribose 1-diphosphate: step 6/9. The sequence is that of Imidazoleglycerol-phosphate dehydratase from Rhodopseudomonas palustris (strain BisB5).